Reading from the N-terminus, the 264-residue chain is S-adenosylmethionine decarboxylase proenzyme (264 aa).

Ser-113 (schiff-base intermediate with substrate; via pyruvic acid) is an active-site residue. Ser-113 is modified (pyruvic acid (Ser); by autocatalysis). The active-site Proton acceptor; for processing activity is His-118. Catalysis depends on Cys-141, which acts as the Proton donor; for catalytic activity.

This sequence belongs to the prokaryotic AdoMetDC family. Type 2 subfamily. In terms of assembly, heterooctamer of four alpha and four beta chains arranged as a tetramer of alpha/beta heterodimers. It depends on pyruvate as a cofactor. In terms of processing, is synthesized initially as an inactive proenzyme. Formation of the active enzyme involves a self-maturation process in which the active site pyruvoyl group is generated from an internal serine residue via an autocatalytic post-translational modification. Two non-identical subunits are generated from the proenzyme in this reaction, and the pyruvate is formed at the N-terminus of the alpha chain, which is derived from the carboxyl end of the proenzyme. The post-translation cleavage follows an unusual pathway, termed non-hydrolytic serinolysis, in which the side chain hydroxyl group of the serine supplies its oxygen atom to form the C-terminus of the beta chain, while the remainder of the serine residue undergoes an oxidative deamination to produce ammonia and the pyruvoyl group blocking the N-terminus of the alpha chain.

The catalysed reaction is S-adenosyl-L-methionine + H(+) = S-adenosyl 3-(methylsulfanyl)propylamine + CO2. It participates in amine and polyamine biosynthesis; S-adenosylmethioninamine biosynthesis; S-adenosylmethioninamine from S-adenosyl-L-methionine: step 1/1. Catalyzes the decarboxylation of S-adenosylmethionine to S-adenosylmethioninamine (dcAdoMet), the propylamine donor required for the synthesis of the polyamines spermine and spermidine from the diamine putrescine. This is S-adenosylmethionine decarboxylase proenzyme from Xylella fastidiosa (strain Temecula1 / ATCC 700964).